Reading from the N-terminus, the 426-residue chain is Pyruvate, phosphate dikinase regulatory protein, chloroplastic (426 aa).

A chloroplast-targeting transit peptide spans 1–41 (MIGCAKPLAAPLQAWARPPSPAGRRLPPSFCAPDTSPALTR). Disordered stretches follow at residues 1 to 76 (MIGC…HLDR) and 94 to 124 (AALS…DGED). Positions 94–119 (AALSSASVSAPPVIKSPRPEDAAVAA) are enriched in low complexity. Position 153-160 (153-160 (HSVNAALG)) interacts with ADP.

It belongs to the pyruvate, phosphate/water dikinase regulatory protein family. PDRP subfamily. In terms of assembly, homodimer at pH 7.5 and homotetramer at pH 8.3. It depends on Mg(2+) as a cofactor. Leaf mesophyll-cells.

The protein resides in the plastid. The protein localises to the chloroplast stroma. It catalyses the reaction N(tele)-phospho-L-histidyl/L-threonyl-[pyruvate, phosphate dikinase] + ADP = N(tele)-phospho-L-histidyl/O-phospho-L-threonyl-[pyruvate, phosphate dikinase] + AMP + H(+). It carries out the reaction N(tele)-phospho-L-histidyl/O-phospho-L-threonyl-[pyruvate, phosphate dikinase] + phosphate + H(+) = N(tele)-phospho-L-histidyl/L-threonyl-[pyruvate, phosphate dikinase] + diphosphate. Its pathway is photosynthesis; C4 acid pathway. With respect to regulation, regulated by light/dark exposure. In terms of biological role, bifunctional serine/threonine kinase and phosphorylase involved in the dark/light-mediated regulation of PPDK by catalyzing its phosphorylation/dephosphorylation. Dark/light-induced changes in stromal concentrations of the competing ADP and Pi substrates govern the direction of the reaction. In the dark, phosphorylates the catalytic intermediate of PPDK (PPDK-HisP), inactivating it. Light exposure induces the phosphorolysis reaction that reactivates PPDK. Phosphorylates PPDK at both Ser-528 and Thr-527. Can use ADP as a high specificity substrate and GDP as a lower affinity substrate, but has no activity with UDP. This Zea mays (Maize) protein is Pyruvate, phosphate dikinase regulatory protein, chloroplastic (PDRP1).